Here is a 277-residue protein sequence, read N- to C-terminus: NADPH-dependent 7-cyano-7-deazaguanine reductase (277 aa).

A substrate-binding site is contributed by 83–85 (VES). Position 85–86 (85–86 (SK)) interacts with NADPH. The Thioimide intermediate role is filled by C184. Catalysis depends on D191, which acts as the Proton donor. Residue 223–224 (HE) coordinates substrate. NADPH is bound at residue 252–253 (RG).

The protein belongs to the GTP cyclohydrolase I family. QueF type 2 subfamily. As to quaternary structure, homodimer.

The protein resides in the cytoplasm. It catalyses the reaction 7-aminomethyl-7-carbaguanine + 2 NADP(+) = 7-cyano-7-deazaguanine + 2 NADPH + 3 H(+). The protein operates within tRNA modification; tRNA-queuosine biosynthesis. Functionally, catalyzes the NADPH-dependent reduction of 7-cyano-7-deazaguanine (preQ0) to 7-aminomethyl-7-deazaguanine (preQ1). In Ralstonia nicotianae (strain ATCC BAA-1114 / GMI1000) (Ralstonia solanacearum), this protein is NADPH-dependent 7-cyano-7-deazaguanine reductase.